Consider the following 401-residue polypeptide: Voltage-gated potassium channel subunit beta-1 (401 aa).

Residues Thr-90, Trp-91, Gln-97, and Asp-119 each contribute to the NADP(+) site. The Proton donor/acceptor role is filled by Tyr-124. NADP(+) contacts are provided by Asn-192, Ser-222, Arg-223, Gln-248, Trp-277, Ser-278, Pro-279, Leu-280, Ala-281, Cys-282, Lys-288, Arg-298, Gly-357, Ser-359, Gln-363, Glu-366, and Asn-367.

Belongs to the shaker potassium channel beta subunit family. Homotetramer. Interaction with tetrameric potassium channel alpha subunits gives rise to a heterooctamer. Identified in potassium channel complexes containing KCNA1, KCNA2, KCNA4, KCNA5, KCNA6, KCNAB1 and KCNAB2. Part of a complex containing KCNA1, KCNA4 and LGI1; interaction with LGI1 inhibits down-regulation of KCNA1 channel activity. Interacts with the dimer formed by GNB1 and GNG2; this enhances KCNA1 binding. Interacts with SQSTM1.

The protein localises to the cytoplasm. It is found in the membrane. Its subcellular location is the cell membrane. The catalysed reaction is a primary alcohol + NADP(+) = an aldehyde + NADPH + H(+). It catalyses the reaction a secondary alcohol + NADP(+) = a ketone + NADPH + H(+). Functionally, regulatory subunit of the voltage-gated potassium (Kv) channels composed of pore-forming and potassium-conducting alpha subunits and of regulatory beta subunits. The beta-1/KCNAB1 cytoplasmic subunit mediates closure of delayed rectifier potassium channels by physically obstructing the pore via its N-terminal domain and increases the speed of channel closure for other family members. Promotes the inactivation of KCNA1, KCNA2, KCNA4, KCNA5 and KCNA6 alpha subunit-containing channels. Displays nicotinamide adenine dinucleotide phosphate (NADPH)-dependent aldoketoreductase activity by catalyzing the NADPH-dependent reduction of a variety of endogenous aldehydes and ketones. The binding of NADPH is required for efficient down-regulation of potassium channel activity. Oxidation of the bound NADPH restrains N-terminal domain from blocking the channel, thereby decreasing N-type inactivation of potassium channel activity. This is Voltage-gated potassium channel subunit beta-1 (KCNAB1) from Bos taurus (Bovine).